Consider the following 288-residue polypeptide: ATP synthase gamma chain (288 aa).

Belongs to the ATPase gamma chain family. As to quaternary structure, F-type ATPases have 2 components, CF(1) - the catalytic core - and CF(0) - the membrane proton channel. CF(1) has five subunits: alpha(3), beta(3), gamma(1), delta(1), epsilon(1). CF(0) has three main subunits: a, b and c.

Its subcellular location is the cell inner membrane. Functionally, produces ATP from ADP in the presence of a proton gradient across the membrane. The gamma chain is believed to be important in regulating ATPase activity and the flow of protons through the CF(0) complex. The polypeptide is ATP synthase gamma chain (Glaesserella parasuis serovar 5 (strain SH0165) (Haemophilus parasuis)).